Consider the following 301-residue polypeptide: Cutinase (301 aa).

The first 40 residues, 1–40 (MAVMTPRRERSSLLSRALQVTAAAATALVTAVSLAAPAHA), serve as a signal peptide directing secretion. Position 100 (Y100) interacts with poly(ethylene terephthalate). S170 functions as the Nucleophile in the catalytic mechanism. Residues M171 and W195 each coordinate poly(ethylene terephthalate). Catalysis depends on charge relay system residues D216 and H248. C281 and C299 form a disulfide bridge.

This sequence belongs to the AB hydrolase superfamily.

It localises to the secreted. The protein resides in the periplasm. It catalyses the reaction a butanoate ester + H2O = an aliphatic alcohol + butanoate + H(+). It carries out the reaction (ethylene terephthalate)(n) + H2O = (ethylene terephthalate)(n-1) + 4-[(2-hydroxyethoxy)carbonyl]benzoate + H(+). The enzyme catalyses cutin + H2O = cutin monomers.. Its activity is regulated as follows. Activated by magnesium ions. Activated by calcium ions. Inhibited by the serine hydrolase inhibitor phenylmethanesulfonyl fluoride (PMSF). Functionally, catalyzes the hydrolysis of cutin, a polyester that forms the structure of plant cuticle. Shows esterase activity towards p-nitrophenol-linked aliphatic esters (pNP-aliphatic esters). Also hydrolyzes the triglyceride triolein. Capable of degrading the plastic poly(ethylene terephthalate) (PET), the most abundant polyester plastic in the world. In Thermobifida fusca (strain YX), this protein is Cutinase.